Reading from the N-terminus, the 131-residue chain is D-ribose pyranase (131 aa).

His-20 (proton donor) is an active-site residue. Substrate-binding positions include Asp-28, His-98, and 120–122 (YSN).

The protein belongs to the RbsD / FucU family. RbsD subfamily. Homodecamer.

It is found in the cytoplasm. It catalyses the reaction beta-D-ribopyranose = beta-D-ribofuranose. It functions in the pathway carbohydrate metabolism; D-ribose degradation; D-ribose 5-phosphate from beta-D-ribopyranose: step 1/2. In terms of biological role, catalyzes the interconversion of beta-pyran and beta-furan forms of D-ribose. The chain is D-ribose pyranase from Pediococcus pentosaceus (strain ATCC 25745 / CCUG 21536 / LMG 10740 / 183-1w).